The primary structure comprises 157 residues: Transcription elongation factor GreA (157 aa).

Residues 17-37 adopt a coiled-coil conformation; sequence ELERLLKLRPQISEAIAEARE.

This sequence belongs to the GreA/GreB family.

Its function is as follows. Necessary for efficient RNA polymerase transcription elongation past template-encoded arresting sites. The arresting sites in DNA have the property of trapping a certain fraction of elongating RNA polymerases that pass through, resulting in locked ternary complexes. Cleavage of the nascent transcript by cleavage factors such as GreA or GreB allows the resumption of elongation from the new 3'terminus. GreA releases sequences of 2 to 3 nucleotides. This is Transcription elongation factor GreA from Vibrio parahaemolyticus serotype O3:K6 (strain RIMD 2210633).